A 528-amino-acid chain; its full sequence is MASPDLFPNVSFSHVSVPAAAGASTEVTGGATAVFGGDASTGAPRLSLVWSGETQAKHTLEIDLSDAQIFKLGPTEWLCVSGESEAKDGVEEKSYSRAIKVVLRTEAESKAFYLAFQQWKHRVISGKAGEPLENGLIIGSKSKFDTKIEASSAKMYFHYYGQLLHQQNMLQDFVRTGTYYAAVMENRSDFEGRVVVDVGAGSGILSLFAAQAGARHVYAVEASEMAEHAQRLISGNPSLGQRITVIKGKVEEVELPEKADILISEPMGTLLVNERMLESYVIARDRFLVPGGKMFPTTGRIHMAPFSDEYLYVEMANKALFWQQHNFFGVDLTPLHGSAFQGYFSQPVVDAFDPRLLVSPPTFHTLDFTTMKEEELYEIDIPLNFVASVGTRVHGLACWFDVLFNGSTVQRWLTTAPGSPTTHWYQLRCILSQPLYVMAGQEITGRLHLVAHSAQSYTIYLTMSAKMWGEGAEQGGILQTSTAKLELKEPYYRLSQPQPYVMQQDQQQQQLPSLQPQSPLWDYHYGQD.

The 316-residue stretch at 149–464 folds into the SAM-dependent MTase PRMT-type domain; it reads EASSAKMYFH…QSYTIYLTMS (316 aa). S-adenosyl-L-methionine-binding residues include Gln-166, Arg-175, Gly-199, Glu-221, Glu-251, and Ser-279. Residues 500–520 show a composition bias toward low complexity; that stretch reads YVMQQDQQQQQLPSLQPQSPL. The disordered stretch occupies residues 500-528; sequence YVMQQDQQQQQLPSLQPQSPLWDYHYGQD.

Belongs to the class I-like SAM-binding methyltransferase superfamily. Protein arginine N-methyltransferase family.

It localises to the nucleus. It is found in the cytoplasm. It carries out the reaction L-arginyl-[protein] + 2 S-adenosyl-L-methionine = N(omega),N(omega)-dimethyl-L-arginyl-[protein] + 2 S-adenosyl-L-homocysteine + 2 H(+). Functionally, methylates (mono- and asymmetric dimethylation) the guanidino nitrogens of arginyl residues in several proteins involved in DNA packaging, transcription regulation, and mRNA stability. Recruited to promoters upon gene activation, methylates histone H3 and activates transcription via chromatin remodeling. In Oryza sativa subsp. indica (Rice), this protein is Probable histone-arginine methyltransferase CARM1 (CARM1).